Reading from the N-terminus, the 248-residue chain is Probable transcriptional regulatory protein Atu3727 (248 aa).

The tract at residues 1-21 (MAGHSQFKNIMHRKGKQDSVR) is disordered.

It belongs to the TACO1 family.

The protein resides in the cytoplasm. This chain is Probable transcriptional regulatory protein Atu3727, found in Agrobacterium fabrum (strain C58 / ATCC 33970) (Agrobacterium tumefaciens (strain C58)).